Consider the following 597-residue polypeptide: uncharacterized protein (597 aa).

The 198-residue stretch at 378-575 (EVSFVVDNSG…YLPRELLRTL (198 aa)) folds into the VWFA domain.

This is an uncharacterized protein from Treponema pallidum (strain Nichols).